Reading from the N-terminus, the 55-residue chain is Ovomucoid (55 aa).

Residues V5 to C55 form the Kazal-like domain. Disulfide bonds link C7-C37, C15-C34, and C23-C55. Residue N44 is glycosylated (N-linked (GlcNAc...) asparagine).

Its subcellular location is the secreted. This Dacelo novaeguineae (Laughing kookaburra) protein is Ovomucoid.